A 214-amino-acid chain; its full sequence is Imidazole glycerol phosphate synthase subunit HisH 2 (214 aa).

The Glutamine amidotransferase type-1 domain maps to 2–210; the sequence is KIVIIDYDMG…LDWVKIQKLG (209 aa). C82 acts as the Nucleophile in catalysis. Residues H185 and E187 contribute to the active site.

In terms of assembly, heterodimer of HisH and HisF.

Its subcellular location is the cytoplasm. It catalyses the reaction 5-[(5-phospho-1-deoxy-D-ribulos-1-ylimino)methylamino]-1-(5-phospho-beta-D-ribosyl)imidazole-4-carboxamide + L-glutamine = D-erythro-1-(imidazol-4-yl)glycerol 3-phosphate + 5-amino-1-(5-phospho-beta-D-ribosyl)imidazole-4-carboxamide + L-glutamate + H(+). It carries out the reaction L-glutamine + H2O = L-glutamate + NH4(+). It functions in the pathway amino-acid biosynthesis; L-histidine biosynthesis; L-histidine from 5-phospho-alpha-D-ribose 1-diphosphate: step 5/9. IGPS catalyzes the conversion of PRFAR and glutamine to IGP, AICAR and glutamate. The HisH subunit provides the glutamine amidotransferase activity that produces the ammonia necessary to HisF for the synthesis of IGP and AICAR. This Vibrio vulnificus (strain YJ016) protein is Imidazole glycerol phosphate synthase subunit HisH 2 (hisH2).